The following is a 223-amino-acid chain: N-terminal Xaa-Pro-Lys N-methyltransferase 1-B (223 aa).

Residues glycine 69, arginine 74, 91-93 (DVT), 119-120 (LQ), and glutamine 135 contribute to the S-adenosyl-L-methionine site.

It belongs to the methyltransferase superfamily. NTM1 family.

It is found in the nucleus. The catalysed reaction is N-terminal L-alanyl-L-prolyl-L-lysyl-[protein] + 3 S-adenosyl-L-methionine = N-terminal N,N,N-trimethyl-L-alanyl-L-prolyl-L-lysyl-[protein] + 3 S-adenosyl-L-homocysteine + 3 H(+). The enzyme catalyses N-terminal L-seryl-L-prolyl-L-lysyl-[protein] + 3 S-adenosyl-L-methionine = N-terminal N,N,N-trimethyl-L-seryl-L-prolyl-L-lysyl-[protein] + 3 S-adenosyl-L-homocysteine + 3 H(+). It carries out the reaction N-terminal L-prolyl-L-prolyl-L-lysyl-[protein] + 2 S-adenosyl-L-methionine = N-terminal N,N-dimethyl-L-prolyl-L-prolyl-L-lysyl-[protein] + 2 S-adenosyl-L-homocysteine + 2 H(+). Its function is as follows. Distributive alpha-N-methyltransferase that methylates the N-terminus of target proteins containing the N-terminal motif [Ala/Gly/Pro/Ser]-Pro-Lys when the initiator Met is cleaved. Specifically catalyzes mono-, di- or tri-methylation of the exposed alpha-amino group of the Ala, Gly or Ser residue in the [Ala/Gly/Ser]-Pro-Lys motif and mono- or di-methylation of Pro in the Pro-Pro-Lys motif. Required during mitosis for normal bipolar spindle formation and chromosome segregation via its action on target proteins. The sequence is that of N-terminal Xaa-Pro-Lys N-methyltransferase 1-B (ntmt1-b) from Xenopus laevis (African clawed frog).